The primary structure comprises 130 residues: MSMQDPISDMLTRLRNGQTAKKVAVKMPSSKQKVAIAALLKEEGFVAEFTVTGDVKPELEVTLKYFEANPVIEQIQRVSRPGLRIYKKKDALPSVMGGLGIAVVSTSKGLMTDRAARKAGLGGEIICYVA.

The protein belongs to the universal ribosomal protein uS8 family. In terms of assembly, part of the 30S ribosomal subunit. Contacts proteins S5 and S12.

One of the primary rRNA binding proteins, it binds directly to 16S rRNA central domain where it helps coordinate assembly of the platform of the 30S subunit. The chain is Small ribosomal subunit protein uS8 from Photobacterium profundum (strain SS9).